A 145-amino-acid polypeptide reads, in one-letter code: Large ribosomal subunit protein uL16 (145 aa).

The protein belongs to the universal ribosomal protein uL16 family. Part of the 50S ribosomal subunit.

Its function is as follows. Binds 23S rRNA and is also seen to make contacts with the A and possibly P site tRNAs. This chain is Large ribosomal subunit protein uL16, found in Herpetosiphon aurantiacus (strain ATCC 23779 / DSM 785 / 114-95).